Consider the following 1567-residue polypeptide: ABC multidrug transporter MDR1 (1567 aa).

Residues 1–11 (MASQPPQPPSG) show a composition bias toward pro residues. The interval 1–37 (MASQPPQPPSGQPDTQYEEYQSEVITETTNRPTPAAD) is disordered. Polar residues predominate over residues 22–32 (SEVITETTNRP). N-linked (GlcNAc...) asparagine glycosylation is found at Asn-149, Asn-157, and Asn-356. The ABC transporter 1 domain occupies 167-432 (VQYQDTFLSP…FEEMGWYCPP (266 aa)). 6 helical membrane passes run 543-563 (STIA…SLFF), 571-591 (GFFA…LMSI), 636-656 (IPIK…LGGL), 661-681 (AKFF…SAIF), 691-711 (IPQA…YTGF), and 798-818 (LGIL…VSEL). Asn-819, Asn-895, and Asn-912 each carry an N-linked (GlcNAc...) asparagine glycan. An ABC transporter 2 domain is found at 891–1134 (FTWRNVTYDI…LLNYFETHGA (244 aa)). 927–934 (GVSGAGKT) contributes to the ATP binding site. The tract at residues 1172–1202 (ESRHVQQELDRIQSETSKRNEGHGQSAEKEP) is disordered. Residues 1231-1251 (IWGKLLLGLTSALFIGFSFFL) traverse the membrane as a helical segment. An N-linked (GlcNAc...) asparagine glycan is attached at Asn-1253. The next 5 membrane-spanning stretches (helical) occupy residues 1257-1277 (AGLQ…SSLV), 1305-1325 (VFLL…GIIA), 1345-1365 (ILLL…QMII), 1372-1392 (ETAG…NGVL), and 1498-1518 (GIGW…YYLI).

It belongs to the ABC transporter superfamily. ABCG family. PDR (TC 3.A.1.205) subfamily.

The protein localises to the cell membrane. The catalysed reaction is voriconazole(in) + ATP + H2O = voriconazole(out) + ADP + phosphate + H(+). It carries out the reaction fluconazole(in) + ATP + H2O = fluconazole(out) + ADP + phosphate + H(+). The enzyme catalyses (R)-miconazole(in) + ATP + H2O = (R)-miconazole(out) + ADP + phosphate + H(+). It catalyses the reaction (S)-miconazole(in) + ATP + H2O = (S)-miconazole(out) + ADP + phosphate + H(+). Functionally, pleiotropic ABC efflux transporter that may be involved in the modulation susceptibility to a wide range of unrelated cytotoxic compounds. The sequence is that of ABC multidrug transporter MDR1 from Trichophyton tonsurans (strain CBS 112818) (Scalp ringworm fungus).